The sequence spans 351 residues: Protein MGF 360-12L (351 aa).

Residues 57–89 (DLNMALVKAVKENNYSLIKLFTEWGANINYGLI) form an ANK repeat.

It belongs to the asfivirus MGF 360 family.

Its function is as follows. Plays a role in virus cell tropism, and may be required for efficient virus replication in macrophages. The polypeptide is Protein MGF 360-12L (Ornithodoros (relapsing fever ticks)).